The chain runs to 353 residues: D-alanine--D-alanine ligase A (353 aa).

One can recognise an ATP-grasp domain in the interval 141 to 346; that stretch reads KRLVNEAGLS…YPEIINRLVA (206 aa). Residue 169-224 participates in ATP binding; sequence EQALGLPIFIKPARQGSSVGVHKVVTEADYQAAMSDGFTYDDKLLAEEFIQAREVE. Positions 300, 313, and 315 each coordinate Mg(2+).

The protein belongs to the D-alanine--D-alanine ligase family. Requires Mg(2+) as cofactor. Mn(2+) serves as cofactor.

The protein localises to the cytoplasm. The enzyme catalyses 2 D-alanine + ATP = D-alanyl-D-alanine + ADP + phosphate + H(+). It participates in cell wall biogenesis; peptidoglycan biosynthesis. Cell wall formation. The polypeptide is D-alanine--D-alanine ligase A (Brucella suis biovar 1 (strain 1330)).